Reading from the N-terminus, the 422-residue chain is Glucose-1-phosphate adenylyltransferase (422 aa).

Alpha-D-glucose 1-phosphate-binding positions include Y108, G173, 188–189 (EK), and S206.

It belongs to the bacterial/plant glucose-1-phosphate adenylyltransferase family. As to quaternary structure, homotetramer.

The enzyme catalyses alpha-D-glucose 1-phosphate + ATP + H(+) = ADP-alpha-D-glucose + diphosphate. Its pathway is glycan biosynthesis; glycogen biosynthesis. In terms of biological role, involved in the biosynthesis of ADP-glucose, a building block required for the elongation reactions to produce glycogen. Catalyzes the reaction between ATP and alpha-D-glucose 1-phosphate (G1P) to produce pyrophosphate and ADP-Glc. This chain is Glucose-1-phosphate adenylyltransferase, found in Paraburkholderia phymatum (strain DSM 17167 / CIP 108236 / LMG 21445 / STM815) (Burkholderia phymatum).